The primary structure comprises 611 residues: Calmegin (611 aa).

A signal peptide spans 1–19 (MRFQGVGLCLGLLFITVNA). The Lumenal portion of the chain corresponds to 20 to 471 (DFMDDGVEVE…LVIAAEERPW (452 aa)). At Lys-128 the chain carries N6-acetyllysine. The cysteines at positions 151 and 185 are disulfide-linked. Positions 254 to 335 (LDDVVPPINP…KAEKPEDWSD (82 aa)) are disordered. Residues 265–284 (REIDDPSDKKPEEWDDRAKI) are compositionally biased toward basic and acidic residues. 8 tandem repeats follow at residues 267–280 (IDDP…EWDD), 284–297 (IPDP…DWDE), 303–316 (IEDS…GWLD), 322–335 (IPNP…DWSD), 339–352 (GEWE…PACQ), 356–369 (GEWK…PKYK), 370–383 (GIWR…PNYQ), and 384–397 (GLWS…PDYF). Residues 317-350 (DEPKFIPNPKAEKPEDWSDDMDGEWEAPHIPNPA) are interaction with PPIB. Residues Cys-351 and Cys-355 are joined by a disulfide bond. Residues 472 to 492 (LWLMYLVMAGLPVALVASFCW) form a helical membrane-spanning segment. Residues 493 to 611 (PRKVKKKYED…SLRKRRVRKD (119 aa)) lie on the Cytoplasmic side of the membrane. The tract at residues 517–611 (AALEQEAEEE…SLRKRRVRKD (95 aa)) is disordered. A compositionally biased stretch (basic and acidic residues) spans 526 to 584 (EKAPEKPEDVQEEKKPGEAEVVTVEKEVIGEPEEKSKEDRETLEGQEEVSKLSKSGSED). Phosphoserine is present on residues Ser-561, Ser-578, Ser-580, Ser-582, Ser-592, Ser-595, and Ser-602. Basic residues predominate over residues 602–611 (SLRKRRVRKD).

Belongs to the calreticulin family. As to quaternary structure, interacts with PDILT and PPIB. Interacts with ADAM2. Interacts with ADAM1A, ADAM1B and ADAM3; these are protein-coding genes in mouse but may be pseudogenes in other organisms. Detected in testis (at protein level). Detected in testis.

It localises to the endoplasmic reticulum membrane. Functionally, functions during spermatogenesis as a chaperone for a range of client proteins that are important for sperm adhesion onto the egg zona pellucida and for subsequent penetration of the zona pellucida. Required for normal sperm migration from the uterus into the oviduct. Required for normal male fertility. Binds calcium ions. This is Calmegin (Clgn) from Mus musculus (Mouse).